The primary structure comprises 395 residues: MSVIPSSRPVSTLAPDNDFREIHNWTELLHLFNQTFSDCHMELNENTKQVVLFVFYLAIFVVGLVENVLVICVNCRRSGRVGMLNLYILNMAVADLGIILSLPVWMLEVMLEYTWLWGSFSCRFIHYFYLANMYSSIFFLTCLSIDRYVTLTNTSPSWQRHQHRIRRAVCAGVWVLSAIIPLPEVVHIQLLDGSEPMCLFLAPFETYSAWALAVALSATILGFLLPFPLIAVFNILSACRLRRQGQTESRRHCLLMWAYIVVFVICWLPYHVTMLLLTLHTTHIFLHCNLVNFLYFFYEIIDCFSMLHCVANPILYNFLSPSFRGRLLSLVVRYLPKEQARAAGGRASSSSSTQHSIIITKEGSLPLQRICTPTPSETCRPPLCLRTPHLHSAIP.

Over 1-53 (MSVIPSSRPVSTLAPDNDFREIHNWTELLHLFNQTFSDCHMELNENTKQVVLF) the chain is Extracellular. N-linked (GlcNAc...) asparagine glycosylation is found at Asn24 and Asn33. Residues 54 to 75 (VFYLAIFVVGLVENVLVICVNC) traverse the membrane as a helical segment. Residues 76-86 (RRSGRVGMLNL) are Cytoplasmic-facing. A helical transmembrane segment spans residues 87-109 (YILNMAVADLGIILSLPVWMLEV). At 110 to 123 (MLEYTWLWGSFSCR) the chain is on the extracellular side. Cys122 and Cys198 form a disulfide bridge. Residues 124-145 (FIHYFYLANMYSSIFFLTCLSI) traverse the membrane as a helical segment. At 146–166 (DRYVTLTNTSPSWQRHQHRIR) the chain is on the cytoplasmic side. A helical membrane pass occupies residues 167–189 (RAVCAGVWVLSAIIPLPEVVHIQ). The Extracellular segment spans residues 190 to 213 (LLDGSEPMCLFLAPFETYSAWALA). Residues 214 to 235 (VALSATILGFLLPFPLIAVFNI) form a helical membrane-spanning segment. The Cytoplasmic portion of the chain corresponds to 236–254 (LSACRLRRQGQTESRRHCL). The helical transmembrane segment at 255-276 (LMWAYIVVFVICWLPYHVTMLL) threads the bilayer. Residues 277 to 295 (LTLHTTHIFLHCNLVNFLY) lie on the Extracellular side of the membrane. A helical membrane pass occupies residues 296 to 316 (FFYEIIDCFSMLHCVANPILY). Residues 317 to 395 (NFLSPSFRGR…RTPHLHSAIP (79 aa)) are Cytoplasmic-facing. Ser329 carries the post-translational modification Phosphoserine.

This sequence belongs to the G-protein coupled receptor 1 family. Expressed in a wide variety of peripheral tissues in the adult rat with prominent expression in lung, testis, adrenal and liver.

Its subcellular location is the cell membrane. Functionally, orphan receptor. This is G-protein coupled receptor 182 (Gpr182) from Rattus norvegicus (Rat).